The chain runs to 69 residues: KHHLEYHLRNHFGSKPFKCEKCSYSCVNKSMLNSHLKSHSNVYQYRCANCTYATKYCHSLKLHLRKYSH.

C2H2-type zinc fingers lie at residues 1-11 (KHHLEYHLRNH), 17-39 (FKCEKCSYSCVNKSMLNSHLKSH), and 45-69 (YRCANCTYATKYCHSLKLHLRKYSH).

It belongs to the hunchback C2H2-type zinc-finger protein family.

The protein resides in the nucleus. Its function is as follows. Gap class segmentation protein that controls development of head structures. This is Protein hunchback (hb) from Apis mellifera (Honeybee).